A 428-amino-acid polypeptide reads, in one-letter code: Trigger factor (428 aa).

One can recognise a PPIase FKBP-type domain in the interval 163-248; it reads GDTAVIDFEG…VHEIKEKRLP (86 aa).

This sequence belongs to the FKBP-type PPIase family. Tig subfamily.

The protein resides in the cytoplasm. It catalyses the reaction [protein]-peptidylproline (omega=180) = [protein]-peptidylproline (omega=0). Its function is as follows. Involved in protein export. Acts as a chaperone by maintaining the newly synthesized protein in an open conformation. Functions as a peptidyl-prolyl cis-trans isomerase. This chain is Trigger factor, found in Geobacillus sp. (strain WCH70).